Here is a 98-residue protein sequence, read N- to C-terminus: Large ribosomal subunit protein uL23 (98 aa).

The protein belongs to the universal ribosomal protein uL23 family. In terms of assembly, part of the 50S ribosomal subunit. Contacts protein L29, and trigger factor when it is bound to the ribosome.

One of the early assembly proteins it binds 23S rRNA. One of the proteins that surrounds the polypeptide exit tunnel on the outside of the ribosome. Forms the main docking site for trigger factor binding to the ribosome. The sequence is that of Large ribosomal subunit protein uL23 from Bifidobacterium longum (strain DJO10A).